A 149-amino-acid chain; its full sequence is Transcriptional repressor NrdR (149 aa).

The segment at 3–34 is a zinc-finger region; the sequence is CPFCSAVDTKVIDSRLVGEGSQVRRRRQCLVC. Residues 49–139 form the ATP-cone domain; it reads PRVIKSNEVR…VYRSFEDIRE (91 aa).

This sequence belongs to the NrdR family. Requires Zn(2+) as cofactor.

Functionally, negatively regulates transcription of bacterial ribonucleotide reductase nrd genes and operons by binding to NrdR-boxes. This chain is Transcriptional repressor NrdR, found in Pectobacterium atrosepticum (strain SCRI 1043 / ATCC BAA-672) (Erwinia carotovora subsp. atroseptica).